The sequence spans 141 residues: Sporulation-specific cell division protein SsgB (141 aa).

It belongs to the SsgA family. In terms of assembly, interacts with SsgA. Interacts with FtsZ (via N-terminus).

The protein resides in the cell septum. Its function is as follows. Involved in sporulation-specific cell division. Required for early stages of sporulation. Important in the process of growth cessation prior to sporulation-specific cell division. Recruits cell division protein FtsZ to the future septum sites and tethers the contractile ring structure (Z ring) to the cytoplasmic membrane during sporulation. Stimulates polymerization and filament length of FtsZ in vitro. This chain is Sporulation-specific cell division protein SsgB, found in Saccharopolyspora erythraea (strain ATCC 11635 / DSM 40517 / JCM 4748 / NBRC 13426 / NCIMB 8594 / NRRL 2338).